The chain runs to 490 residues: GTPase Der (490 aa).

EngA-type G domains lie at 3–167 (FTLA…DAFE) and 203–378 (LQVA…EVWN). Residues 9 to 16 (GRPNVGKS), 56 to 60 (DTAGL), 119 to 122 (NKAE), 209 to 216 (GRPNAGKS), 256 to 260 (DTAGM), and 321 to 324 (NKWD) contribute to the GTP site. The 87-residue stretch at 379–465 (RRVPTAALNR…RLTMRSQSDA (87 aa)) folds into the KH-like domain. Residues 451–490 (PGTPIRLTMRSQSDANPYKNRKKSTPSRLRKHLGKPSLKG) form a disordered region. A compositionally biased stretch (basic residues) spans 469 to 484 (KNRKKSTPSRLRKHLG).

Belongs to the TRAFAC class TrmE-Era-EngA-EngB-Septin-like GTPase superfamily. EngA (Der) GTPase family. Associates with the 50S ribosomal subunit.

Its function is as follows. GTPase that plays an essential role in the late steps of ribosome biogenesis. The chain is GTPase Der from Dinoroseobacter shibae (strain DSM 16493 / NCIMB 14021 / DFL 12).